The sequence spans 1288 residues: 5-oxoprolinase (1288 aa).

Thr-151 carries the phosphothreonine modification. Positions 1248-1272 (PGGGGYGDPEDPAPPPGSPPQALAF) are disordered. Ser-1265 is subject to Phosphoserine.

It belongs to the oxoprolinase family. As to quaternary structure, homodimer.

It is found in the cytoplasm. Its subcellular location is the cytosol. The catalysed reaction is 5-oxo-L-proline + ATP + 2 H2O = L-glutamate + ADP + phosphate + H(+). In terms of biological role, catalyzes the cleavage of 5-oxo-L-proline to form L-glutamate coupled to the hydrolysis of ATP to ADP and inorganic phosphate. This Homo sapiens (Human) protein is 5-oxoprolinase.